The following is a 2363-amino-acid chain: Spectrin beta chain, non-erythrocytic 1 (2363 aa).

An N-acetylthreonine modification is found at Thr-2. The tract at residues 2 to 275 (TTTVATDYDN…IITYVVTYYH (274 aa)) is actin-binding. A phosphoserine mark is found at Ile-14 and Ser-36. Calponin-homology (CH) domains lie at 54–158 (AVQK…LRFQ) and 173–278 (KSAK…HYFS). Position 90 is an N6-acetyllysine (Lys-90). At Ser-228 the chain carries Phosphoserine. 15 Spectrin repeats span residues 303-411 (MIEK…LALR), 423-525 (LARR…QRLE), 530-636 (LQKI…RLEE), 639-742 (RLWK…RLEE), 745-847 (LLHQ…ALQD), 850-952 (ALYK…DALL), 957-1060 (IQNY…SLGE), 1063-1166 (KLQQ…NLLS), 1170-1259 (AYQQ…RHRK), 1276-1376 (DLQK…AQRL), 1381-1482 (KAEL…HNLL), 1486-1590 (EIHQ…RLEE), 1592-1696 (HKAQ…KLDE), 1698-1801 (HRLF…TQIL), and 1805-1907 (YELH…RVRL). Ser-817, Ser-903, Ser-1057, Ser-1076, Ser-1079, and Ser-1237 each carry phosphoserine. Residues Ser-1388, Ser-1447, and Ser-1557 each carry the phosphoserine modification. The interval 1563–2093 (IRQRLADLKQ…LLEVRRQQEE (531 aa)) is interaction with ANK2. Phosphotyrosine is present on Tyr-1805. Lys-1815, Lys-1913, and Lys-1989 each carry N6-acetyllysine. Spectrin repeat units lie at residues 1914–2014 (FRFF…EWLR) and 2018–2097 (EVHQ…EERK). A disordered region spans residues 2089–2193 (RQQEEEERKR…AATLPARTLE (105 aa)). Phosphoserine is present on residues Ser-2102, Ser-2127, and Ser-2137. Residues 2115–2130 (SQQWDTSKGDQVSQNG) show a composition bias toward polar residues. Thr-2146 is subject to Phosphothreonine. Residue Ser-2147 is modified to Phosphoserine. Residues 2148–2176 (EMVNGAAEQRTSSKESSPVPSPTLDRKAK) form a mediates interaction with CAMSAP1 region. Position 2158 is a phosphothreonine (Thr-2158). 5 positions are modified to phosphoserine: Ser-2159, Ser-2160, Ser-2163, Ser-2164, and Ser-2168. Thr-2170 is modified (phosphothreonine). At Ser-2183 the chain carries Phosphoserine. Phosphothreonine occurs at positions 2186 and 2194. The region spanning 2196–2306 (AAQMEGFLNR…WIQAISSAIS (111 aa)) is the PH domain. Residues 2308 to 2363 (DKHDTSASTQSTPASSRAQTLPTSVVTITSESSPGKREKDKEKDKEKRFSLFGKKK) are disordered. Phosphoserine is present on residues Ser-2313 and Ser-2318. Residues 2313-2327 (SASTQSTPASSRAQT) are compositionally biased toward low complexity. The residue at position 2319 (Thr-2319) is a Phosphothreonine. An O-linked (GlcNAc) serine glycan is attached at Ser-2323. Thr-2327 is subject to Phosphothreonine. Residues 2328–2340 (LPTSVVTITSESS) show a composition bias toward polar residues. 2 positions are modified to phosphoserine: Ser-2339 and Ser-2340. Basic and acidic residues predominate over residues 2341-2356 (PGKREKDKEKDKEKRF).

It belongs to the spectrin family. In terms of assembly, interacts with ANK2. Interacts with CPNE4 (via VWFA domain). Like erythrocyte spectrin, the spectrin-like proteins are capable to form dimers which can further associate to tetramers. Interacts with CAMSAP1. Can form heterodimers with SPTAN1. In terms of tissue distribution, isoform 2 is present in brain, heart, kidney and liver (at protein level).

Its subcellular location is the cytoplasm. The protein localises to the cytoskeleton. It localises to the endomembrane system. It is found in the myofibril. The protein resides in the sarcomere. Its subcellular location is the m line. The protein localises to the cytosol. It localises to the cell membrane. In terms of biological role, fodrin, which seems to be involved in secretion, interacts with calmodulin in a calcium-dependent manner and is thus candidate for the calcium-dependent movement of the cytoskeleton at the membrane. Plays a critical role in central nervous system development and function. The sequence is that of Spectrin beta chain, non-erythrocytic 1 (Sptbn1) from Mus musculus (Mouse).